The chain runs to 1225 residues: Hybrid signal transduction histidine kinase C (1225 aa).

Residues G8–I28 form a helical membrane-spanning segment. Positions L313–R356 are enriched in low complexity. Residues L313 to T407 form a disordered region. Residues N357 to Q368 show a composition bias toward polar residues. Low complexity predominate over residues S370–S388. Positions N389–T407 are enriched in polar residues. Residues H426–T653 form the Histidine kinase domain. H429 carries the post-translational modification Phosphohistidine; by autocatalysis. The region spanning S669 to M784 is the Response regulatory 1 domain. Position 721 is a 4-aspartylphosphate (D721). Disordered regions lie at residues N809–G832, D941–N974, and Y1021–P1076. The span at N945 to M954 shows a compositional bias: polar residues. Residues S1023–G1037 show a composition bias toward low complexity. The segment covering T1058–S1072 has biased composition (polar residues). Residues K1078 to E1200 form the Response regulatory 2 domain. A 4-aspartylphosphate modification is found at D1127.

The protein localises to the membrane. It catalyses the reaction ATP + protein L-histidine = ADP + protein N-phospho-L-histidine.. Acts in a signal transduction pathway that regulates the slug versus culmination choice. Believed to be the first component of a phosphorelay that couples the sensing of ammonia to the modulation of PKA activity and hence activates culmination and spore germination. Ammonium transporters amtA and amtC are thought to respectively activate and inhibit dhkC phosphorelay. This protein probably undergoes an ATP-dependent autophosphorylation at conserved His residue in the kinase core, and a phosphoryl group is then transferred to a conserved aspartate residue in the receiver domain. In Dictyostelium discoideum (Social amoeba), this protein is Hybrid signal transduction histidine kinase C (dhkC).